A 343-amino-acid chain; its full sequence is Glyceraldehyde-3-phosphate dehydrogenase (343 aa).

NAD(+)-binding positions include 13 to 14 (TI) and glycine 111. Position 140 to 142 (140 to 142 (SCN)) interacts with D-glyceraldehyde 3-phosphate. The active-site Nucleophile is cysteine 141. Arginine 169 is a binding site for NAD(+). A D-glyceraldehyde 3-phosphate-binding site is contributed by 195 to 196 (HA). Glutamine 302 contacts NAD(+).

It belongs to the glyceraldehyde-3-phosphate dehydrogenase family. Homotetramer.

It localises to the cytoplasm. The enzyme catalyses D-glyceraldehyde 3-phosphate + phosphate + NADP(+) = (2R)-3-phospho-glyceroyl phosphate + NADPH + H(+). It carries out the reaction D-glyceraldehyde 3-phosphate + phosphate + NAD(+) = (2R)-3-phospho-glyceroyl phosphate + NADH + H(+). It participates in carbohydrate degradation; glycolysis; pyruvate from D-glyceraldehyde 3-phosphate: step 1/5. This is Glyceraldehyde-3-phosphate dehydrogenase from Hyperthermus butylicus (strain DSM 5456 / JCM 9403 / PLM1-5).